The sequence spans 350 residues: Small ribosomal subunit biogenesis GTPase RsgA (350 aa).

Residues 1-17 (MSKNKLSKGQQRRVNAN) are compositionally biased toward polar residues. Residues 1-27 (MSKNKLSKGQQRRVNANHQRRLKTSAE) are disordered. Residues 104 to 273 (TSVLTRPDFY…VIDSPGVREF (170 aa)) form the CP-type G domain. GTP-binding positions include 160-163 (NKID) and 214-222 (GQSGVGKSS). Zn(2+)-binding residues include Cys297, Cys302, His304, and Cys310.

The protein belongs to the TRAFAC class YlqF/YawG GTPase family. RsgA subfamily. As to quaternary structure, monomer. Associates with 30S ribosomal subunit, binds 16S rRNA. It depends on Zn(2+) as a cofactor.

The protein localises to the cytoplasm. One of several proteins that assist in the late maturation steps of the functional core of the 30S ribosomal subunit. Helps release RbfA from mature subunits. May play a role in the assembly of ribosomal proteins into the subunit. Circularly permuted GTPase that catalyzes slow GTP hydrolysis, GTPase activity is stimulated by the 30S ribosomal subunit. The polypeptide is Small ribosomal subunit biogenesis GTPase RsgA (Salmonella typhi).